The chain runs to 180 residues: ADP-ribosylation factor 5 (180 aa).

Gly2 carries the N-myristoyl glycine lipid modification. GTP contacts are provided by residues 24–31 (GLDAAGKT), 67–71 (DVGGQ), and 126–129 (NKQD).

Belongs to the small GTPase superfamily. Arf family. In terms of assembly, interacts (when activated) with GGA1, GGA2 and GGA3; the interaction is required for proper subcellular location of GGA1, GGA2 and GGA3. Binds ASAP2. Interacts with NCS1/FREQ at the Golgi complex. Interacts with RAB11FIP3 and RAB11FIP4.

The protein resides in the golgi apparatus. It localises to the cytoplasm. The protein localises to the perinuclear region. It is found in the membrane. Its subcellular location is the trans-Golgi network membrane. GTP-binding protein involved in protein trafficking; may modulate vesicle budding and uncoating within the Golgi apparatus. Its function is as follows. (Microbial infection) Functions as an allosteric activator of the cholera toxin catalytic subunit, an ADP-ribosyltransferase. The sequence is that of ADP-ribosylation factor 5 (ARF5) from Homo sapiens (Human).